The primary structure comprises 24 residues: Ascaphin-3 (24 aa).

Expressed by the skin glands.

It is found in the secreted. In terms of biological role, antimicrobial peptide that shows higher potency against Gram-negative bacteria than against Gram-positive bacteria. Has a very week hemolytic activity. This Ascaphus truei (Coastal tailed frog) protein is Ascaphin-3.